A 160-amino-acid chain; its full sequence is uncharacterized protein (160 aa).

A helical transmembrane segment spans residues M1–T21.

This sequence belongs to the IIV-6 203L/325L family.

It localises to the membrane. This is an uncharacterized protein from Invertebrate iridescent virus 6 (IIV-6).